An 818-amino-acid chain; its full sequence is MRGVRCPGLLVVCILLSLSGAGTQKAESKNCAKWCPINSKCVSNRSCVCKPGFSSEKELITNPAESCEDINECLLPGFSCGDFAMCKNSEGSYTCVCNLGYKLLSGAESFVNESENTCQASVNTGTTPVPSRIHTVTTAPGNLPEQTTTVHQTQMGDSEERTPKDVNECISGQNHCHQSTHCINKLGGYSCICRQGWKPVPGSPNGPVSTVCEDVDECSSGQHQCHNSTVCKNTVGSYKCHCRPGWKPTSGSLRGPDTICQEPPFPTWTLLPTAHSQTLLRFSVEVQNLLRDFNPATVNYTIQKLIEAVDKLLEDPMETQTQQVAAQLLSNLEQSLRTLAQFLPKGPFTYTSPSNTELSLMVKEQDNKDVTTVHHGQTWMELDWAVTAGAKISENGSSVAGILSSPNMEKLLGNTPLNLEQRRASLEDFYGSPIPSVSLKLLSNINSVFLTNTNTEKLASNVTFKFDFTSVESIEPRHELICAFWKAHNGNGYWDTDGCSMNGTGFCHCNHLTSFAILMAQYHVQDPRLELITKVGLLLSLICLLLCILTFLLVKPIQSSRTMVHLHLCICLFLGSIIFLVGVENEGGEVGLRCRLVAMMLHFCFLAAFCWMALEGVELYFLVVRVFQGQGLSTWQRCLIGYGVPLLIVAISMAVVKMDGYGHATYCWLDFRKQGFLWSFSGPVAFIIFCNAAIFVITVWKLTKKFSEINPNMKKLRKARVLTITAIAQLLVLGCTWGFGLFLFNPHSTWLSYIFTLLNCLQGLFLYVMLCLLNKKVREEYWKWACMVTGSKYTEFNSSTTGTGTSQTRALRSSESGM.

A signal peptide spans 1–23; it reads MRGVRCPGLLVVCILLSLSGAGT. The Extracellular segment spans residues 24-533; that stretch reads QKAESKNCAK…VQDPRLELIT (510 aa). Residues 27-68 enclose the EGF-like 1 domain; it reads ESKNCAKWCPINSKCVSNRSCVCKPGFSSEKELITNPAESCE. Disulfide bonds link Cys31–Cys41, Cys35–Cys47, Cys49–Cys67, Cys73–Cys86, Cys80–Cys95, Cys97–Cys118, Cys169–Cys182, Cys176–Cys191, Cys193–Cys212, Cys218–Cys231, Cys225–Cys240, and Cys242–Cys260. N-linked (GlcNAc...) asparagine glycosylation is present at Asn44. The EGF-like 2; calcium-binding domain maps to 69–119; that stretch reads DINECLLPGFSCGDFAMCKNSEGSYTCVCNLGYKLLSGAESFVNESENTCQ. A glycan (N-linked (GlcNAc...) asparagine) is linked at Asn112. The EGF-like 3; calcium-binding domain maps to 165-213; it reads DVNECISGQNHCHQSTHCINKLGGYSCICRQGWKPVPGSPNGPVSTVCE. Positions 214 to 261 constitute an EGF-like 4; calcium-binding domain; sequence DVDECSSGQHQCHNSTVCKNTVGSYKCHCRPGWKPTSGSLRGPDTICQ. Asn227 carries N-linked (GlcNAc...) asparagine glycosylation. Asn299 and Asn395 each carry an N-linked (GlcNAc...) asparagine glycan. The GAIN-B domain occupies 347–525; it reads PFTYTSPSNT…AILMAQYHVQ (179 aa). Position 425 is a phosphoserine (Ser425). 2 N-linked (GlcNAc...) asparagine glycosylation sites follow: Asn461 and Asn502. Disulfide bonds link Cys482-Cys507 and Cys499-Cys509. Positions 482–525 are GPS; it reads CAFWKAHNGNGYWDTDGCSMNGTGFCHCNHLTSFAILMAQYHVQ. The helical transmembrane segment at 534–554 threads the bilayer; that stretch reads KVGLLLSLICLLLCILTFLLV. The Cytoplasmic segment spans residues 555-562; that stretch reads KPIQSSRT. Residues 563–583 traverse the membrane as a helical segment; the sequence is MVHLHLCICLFLGSIIFLVGV. The Extracellular segment spans residues 584 to 602; the sequence is ENEGGEVGLRCRLVAMMLH. The helical transmembrane segment at 603–623 threads the bilayer; that stretch reads FCFLAAFCWMALEGVELYFLV. Over 624 to 637 the chain is Cytoplasmic; sequence VRVFQGQGLSTWQR. The chain crosses the membrane as a helical span at residues 638–658; it reads CLIGYGVPLLIVAISMAVVKM. The Extracellular segment spans residues 659–679; the sequence is DGYGHATYCWLDFRKQGFLWS. The helical transmembrane segment at 680–700 threads the bilayer; it reads FSGPVAFIIFCNAAIFVITVW. The Cytoplasmic segment spans residues 701–723; sequence KLTKKFSEINPNMKKLRKARVLT. Residues 724-744 traverse the membrane as a helical segment; that stretch reads ITAIAQLLVLGCTWGFGLFLF. Over 745-752 the chain is Extracellular; sequence NPHSTWLS. The chain crosses the membrane as a helical span at residues 753 to 773; the sequence is YIFTLLNCLQGLFLYVMLCLL. Topologically, residues 774–818 are cytoplasmic; sequence NKKVREEYWKWACMVTGSKYTEFNSSTTGTGTSQTRALRSSESGM. Ser798 is modified (phosphoserine). Low complexity predominate over residues 799 to 808; sequence STTGTGTSQT. The segment at 799 to 818 is disordered; sequence STTGTGTSQTRALRSSESGM. At Thr808 the chain carries Phosphothreonine. A compositionally biased stretch (polar residues) spans 809–818; the sequence is RALRSSESGM. Ser814 and Ser816 each carry phosphoserine.

This sequence belongs to the G-protein coupled receptor 2 family. LN-TM7 subfamily. In terms of assembly, forms a heterodimer, consisting of a large extracellular region (alpha subunit) non-covalently linked to a seven-transmembrane moiety (beta subunit). Interacts with complement decay-accelerating factor (DAF). The largest isoform (isoform 1) do not interact with DAF. Also interacts with chondroitin sulfate. Post-translationally, proteolytically cleaved into 2 subunits, an extracellular alpha subunit and a seven-transmembrane subunit. Although predominantly expressed by cells of the immune system, expressed ubiquitously with particularly high levels of expression in the lung and the thymus gland. In the spleen, expression is detected on most myeloid cells and variable portions of T-cells, B-cells and NK cells. In the bone marrow, expressed in nearly all myeloid cells, whereas little if any expression is found on erythroid cells.

It localises to the cell membrane. The protein localises to the secreted. It is found in the extracellular space. Receptor potentially involved in both adhesion and signaling processes early after leukocyte activation. Plays an essential role in leukocyte migration. This Mus musculus (Mouse) protein is Adhesion G protein-coupled receptor E5.